We begin with the raw amino-acid sequence, 339 residues long: Dihydroorotate dehydrogenase (quinone) (339 aa).

Residues 64–68 and Thr88 contribute to the FMN site; that span reads AGADK. Lys68 is a binding site for substrate. 113–117 contacts substrate; sequence NRNGF. Residues Asn141 and Asn174 each contribute to the FMN site. Asn174 is a binding site for substrate. Ser177 acts as the Nucleophile in catalysis. Asn179 provides a ligand contact to substrate. 2 residues coordinate FMN: Lys219 and Thr247. 248 to 249 is a substrate binding site; that stretch reads NT. Residues Gly270, Gly299, and 320-321 each bind FMN; that span reads YS.

It belongs to the dihydroorotate dehydrogenase family. Type 2 subfamily. In terms of assembly, monomer. FMN is required as a cofactor.

It localises to the cell membrane. It catalyses the reaction (S)-dihydroorotate + a quinone = orotate + a quinol. It functions in the pathway pyrimidine metabolism; UMP biosynthesis via de novo pathway; orotate from (S)-dihydroorotate (quinone route): step 1/1. Catalyzes the conversion of dihydroorotate to orotate with quinone as electron acceptor. The polypeptide is Dihydroorotate dehydrogenase (quinone) (Haemophilus influenzae (strain PittGG)).